We begin with the raw amino-acid sequence, 415 residues long: Mitogen-activated protein kinase kinae MST7 (415 aa).

The segment at 1–37 (MADPFAPRTMKRRNVKGLALTPAAPKPPPTAENAPIH) is disordered. One can recognise a Protein kinase domain in the interval 61-326 (LEVIKDLGSG…EELFERDPFV (266 aa)). Residues 67-75 (LGSGNGGTV) and Lys-90 each bind ATP. The disordered stretch occupies residues 363–409 (DLLRSSDSPTATYHGDDRPLETPTSAYRVDPRRGPAEGSAGLADQVD).

This sequence belongs to the protein kinase superfamily. STE Ser/Thr protein kinase family. MAP kinase kinase subfamily. As to quaternary structure, homodimer. Interacts with the adapter protein MST50. Interacts with TRX2.

It carries out the reaction L-seryl-[protein] + ATP = O-phospho-L-seryl-[protein] + ADP + H(+). The enzyme catalyses L-threonyl-[protein] + ATP = O-phospho-L-threonyl-[protein] + ADP + H(+). Its function is as follows. Mitogen-activated protein kinase kinase; part of the MST11-MST7-PMK1 MAP kinase (MAPK) cascade that is essential for appressorium formation, penetration and invasive growth. The MST11-MST7-PMK1 MAP kinase cascade transduces signals from the cell surface sensors MDB2 and SHO1 that recognize various surface signals such as surface hydrophobicity, cutin monomers, and rice leaf waxes. MST7 acts as the upstream MAPKK that directly phosphorylates MAP kinase PMK1. The sequence is that of Mitogen-activated protein kinase kinae MST7 from Pyricularia oryzae (strain 70-15 / ATCC MYA-4617 / FGSC 8958) (Rice blast fungus).